The following is a 154-amino-acid chain: Interleukin-2 (154 aa).

A signal peptide spans 1-20 (MYKIQLLSCIALTLILVTNS). An intrachain disulfide couples Cys78 to Cys126. N-linked (GlcNAc...) asparagine glycosylation occurs at Asn111.

This sequence belongs to the IL-2 family.

It is found in the secreted. Cytokine produced by activated CD4-positive helper T-cells and to a lesser extend activated CD8-positive T-cells and natural killer (NK) cells that plays pivotal roles in the immune response and tolerance. Binds to a receptor complex composed of either the high-affinity trimeric IL-2R (IL2RA/CD25, IL2RB/CD122 and IL2RG/CD132) or the low-affinity dimeric IL-2R (IL2RB and IL2RG). Interaction with the receptor leads to oligomerization and conformation changes in the IL-2R subunits resulting in downstream signaling starting with phosphorylation of JAK1 and JAK3. In turn, JAK1 and JAK3 phosphorylate the receptor to form a docking site leading to the phosphorylation of several substrates including STAT5. This process leads to activation of several pathways including STAT, phosphoinositide-3-kinase/PI3K and mitogen-activated protein kinase/MAPK pathways. Functions as a T-cell growth factor and can increase NK-cell cytolytic activity as well. Promotes strong proliferation of activated B-cells and subsequently immunoglobulin production. Plays a pivotal role in regulating the adaptive immune system by controlling the survival and proliferation of regulatory T-cells, which are required for the maintenance of immune tolerance. Moreover, participates in the differentiation and homeostasis of effector T-cell subsets, including Th1, Th2, Th17 as well as memory CD8-positive T-cells. The protein is Interleukin-2 (IL2) of Felis catus (Cat).